The primary structure comprises 142 residues: Large ribosomal subunit protein uL11 (142 aa).

Belongs to the universal ribosomal protein uL11 family. Part of the ribosomal stalk of the 50S ribosomal subunit. Interacts with L10 and the large rRNA to form the base of the stalk. L10 forms an elongated spine to which L12 dimers bind in a sequential fashion forming a multimeric L10(L12)X complex. In terms of processing, one or more lysine residues are methylated.

In terms of biological role, forms part of the ribosomal stalk which helps the ribosome interact with GTP-bound translation factors. The protein is Large ribosomal subunit protein uL11 of Vibrio vulnificus (strain CMCP6).